We begin with the raw amino-acid sequence, 305 residues long: Ribonuclease HIII (305 aa).

The RNase H type-2 domain maps to 91 to 305 (WSVIGSDEVG…ANTQKAQKLL (215 aa)). Residues D97, E98, and D201 each contribute to the a divalent metal cation site.

The protein belongs to the RNase HII family. RnhC subfamily. The cofactor is Mn(2+). Mg(2+) serves as cofactor.

It is found in the cytoplasm. The catalysed reaction is Endonucleolytic cleavage to 5'-phosphomonoester.. In terms of biological role, endonuclease that specifically degrades the RNA of RNA-DNA hybrids. The protein is Ribonuclease HIII of Enterococcus faecalis (strain ATCC 700802 / V583).